A 543-amino-acid polypeptide reads, in one-letter code: Glutamyl-tRNA(Gln) amidotransferase subunit A, chloroplastic/mitochondrial (543 aa).

Residues Lys-121 and Ser-196 each act as charge relay system in the active site. The active-site Acyl-ester intermediate is the Ser-220.

The protein belongs to the amidase family. GatA subfamily. In terms of assembly, subunit of the heterotrimeric GatCAB amidotransferase (AdT) complex, composed of A, B and C subunits.

It is found in the mitochondrion. The protein resides in the plastid. The protein localises to the chloroplast stroma. The catalysed reaction is L-glutamyl-tRNA(Gln) + L-glutamine + ATP + H2O = L-glutaminyl-tRNA(Gln) + L-glutamate + ADP + phosphate + H(+). Its function is as follows. Allows the formation of correctly charged Gln-tRNA(Gln) through the transamidation of misacylated Glu-tRNA(Gln) in chloroplasts and mitochondria. The reaction takes place in the presence of glutamine and ATP through an activated gamma-phospho-Glu-tRNA(Gln). The sequence is that of Glutamyl-tRNA(Gln) amidotransferase subunit A, chloroplastic/mitochondrial from Zea mays (Maize).